The sequence spans 416 residues: Serine hydroxymethyltransferase (416 aa).

Residues leucine 121 and 125–127 each bind (6S)-5,6,7,8-tetrahydrofolate; that span reads GHL. Lysine 230 is modified (N6-(pyridoxal phosphate)lysine).

It belongs to the SHMT family. Homodimer. The cofactor is pyridoxal 5'-phosphate.

The protein resides in the cytoplasm. The enzyme catalyses (6R)-5,10-methylene-5,6,7,8-tetrahydrofolate + glycine + H2O = (6S)-5,6,7,8-tetrahydrofolate + L-serine. It functions in the pathway one-carbon metabolism; tetrahydrofolate interconversion. Its pathway is amino-acid biosynthesis; glycine biosynthesis; glycine from L-serine: step 1/1. Catalyzes the reversible interconversion of serine and glycine with tetrahydrofolate (THF) serving as the one-carbon carrier. This reaction serves as the major source of one-carbon groups required for the biosynthesis of purines, thymidylate, methionine, and other important biomolecules. Also exhibits THF-independent aldolase activity toward beta-hydroxyamino acids, producing glycine and aldehydes, via a retro-aldol mechanism. This is Serine hydroxymethyltransferase from Nitrosospira multiformis (strain ATCC 25196 / NCIMB 11849 / C 71).